The following is a 316-amino-acid chain: Protoheme IX farnesyltransferase (316 aa).

9 helical membrane-spanning segments follow: residues 32–52 (VMSL…GHIH), 53–73 (PVLG…SGAL), 93–113 (IPAG…LSGF), 116–136 (VILG…TIFF), 152–172 (NIVI…ACVT), 180–200 (TVLF…LALF), 221–241 (VTKH…ILPS), 252–271 (LVAA…VWRM), and 289–309 (IFYL…SIFV).

The protein belongs to the UbiA prenyltransferase family. Protoheme IX farnesyltransferase subfamily.

The protein localises to the cell inner membrane. The enzyme catalyses heme b + (2E,6E)-farnesyl diphosphate + H2O = Fe(II)-heme o + diphosphate. The protein operates within porphyrin-containing compound metabolism; heme O biosynthesis; heme O from protoheme: step 1/1. Its function is as follows. Converts heme B (protoheme IX) to heme O by substitution of the vinyl group on carbon 2 of heme B porphyrin ring with a hydroxyethyl farnesyl side group. The protein is Protoheme IX farnesyltransferase of Rhizobium leguminosarum bv. trifolii (strain WSM2304).